The following is a 22-amino-acid chain: MICOS complex subunit MIC60 (22 aa).

Belongs to the MICOS complex subunit Mic60 family. As to quaternary structure, component of the mitochondrial contact site and cristae organizing system (MICOS) complex, composed of at least MICOS10/MIC10, CHCHD3/MIC19, CHCHD6/MIC25, APOOL/MIC27, IMMT/MIC60, APOO/MIC23/MIC26 and MICOS13/MIC13. This complex was also known under the names MINOS or MitOS complex. The MICOS complex associates with mitochondrial outer membrane proteins SAMM50, MTX1 and MTX2 (together described as components of the mitochondrial outer membrane sorting assembly machinery (SAM) complex) and DNAJC11, mitochondrial inner membrane protein TMEM11 and with HSPA9. The MICOS and SAM complexes together with DNAJC11 are part of a large protein complex spanning both membranes termed the mitochondrial intermembrane space bridging (MIB) complex. Interacts with HSPA1A/HSPA1B and OPA1, preferentially with the soluble OPA1 form. Interacts with MICOS13/MIC13, MICOS10/MIC10, CHCHD3/MIC19, CHCHD6/MIC25, SAMM50 and TMEM11. Interacts with APOO/MIC23/MIC26 and APOOL/MIC27. Interacts with ARMC1. Interacts with ARMC12.

The protein resides in the mitochondrion inner membrane. The protein localises to the mitochondrion. Its function is as follows. Component of the MICOS complex, a large protein complex of the mitochondrial inner membrane that plays crucial roles in the maintenance of crista junctions, inner membrane architecture, and formation of contact sites to the outer membrane. Plays an important role in the maintenance of the MICOS complex stability and the mitochondrial cristae morphology. This is MICOS complex subunit MIC60 from Mesocricetus auratus (Golden hamster).